Here is a 117-residue protein sequence, read N- to C-terminus: Large ribosomal subunit protein uL18 (117 aa).

This sequence belongs to the universal ribosomal protein uL18 family. Part of the 50S ribosomal subunit; part of the 5S rRNA/L5/L18/L25 subcomplex. Contacts the 5S and 23S rRNAs.

This is one of the proteins that bind and probably mediate the attachment of the 5S RNA into the large ribosomal subunit, where it forms part of the central protuberance. The polypeptide is Large ribosomal subunit protein uL18 (Methylobacillus flagellatus (strain ATCC 51484 / DSM 6875 / VKM B-1610 / KT)).